Here is a 248-residue protein sequence, read N- to C-terminus: Pyridoxine 5'-phosphate synthase (248 aa).

Asparagine 7 serves as a coordination point for 3-amino-2-oxopropyl phosphate. 9–10 (DH) contacts 1-deoxy-D-xylulose 5-phosphate. Arginine 18 serves as a coordination point for 3-amino-2-oxopropyl phosphate. The active-site Proton acceptor is histidine 52. 2 residues coordinate 1-deoxy-D-xylulose 5-phosphate: arginine 54 and histidine 59. The active-site Proton acceptor is glutamate 79. Threonine 109 is a 1-deoxy-D-xylulose 5-phosphate binding site. The Proton donor role is filled by histidine 201. Residues glycine 202 and 223–224 (GH) each bind 3-amino-2-oxopropyl phosphate.

The protein belongs to the PNP synthase family. As to quaternary structure, homooctamer; tetramer of dimers.

It localises to the cytoplasm. It catalyses the reaction 3-amino-2-oxopropyl phosphate + 1-deoxy-D-xylulose 5-phosphate = pyridoxine 5'-phosphate + phosphate + 2 H2O + H(+). The protein operates within cofactor biosynthesis; pyridoxine 5'-phosphate biosynthesis; pyridoxine 5'-phosphate from D-erythrose 4-phosphate: step 5/5. Catalyzes the complicated ring closure reaction between the two acyclic compounds 1-deoxy-D-xylulose-5-phosphate (DXP) and 3-amino-2-oxopropyl phosphate (1-amino-acetone-3-phosphate or AAP) to form pyridoxine 5'-phosphate (PNP) and inorganic phosphate. This is Pyridoxine 5'-phosphate synthase from Opitutus terrae (strain DSM 11246 / JCM 15787 / PB90-1).